The following is a 635-amino-acid chain: MAGUK p55 subfamily member 4 (635 aa).

A compositionally biased stretch (basic and acidic residues) spans 1–16; that stretch reads MRQSDRGAELTNEDRA. The interval 1–23 is disordered; it reads MRQSDRGAELTNEDRALPTPPDP. L27 domains lie at 23–79 and 86–136; these read PENG…EKKL and AQIL…FEPL. The 82-residue stretch at 153 to 234 folds into the PDZ domain; sequence IVCLVKNQQP…TIMFKVIPVS (82 aa). Residues 241-311 enclose the SH3 domain; the sequence is QKMVYVRAMI…PSNHLLKRKQ (71 aa). The 190-residue stretch at 426 to 615 folds into the Guanylate kinase-like domain; sequence HRLIVLVGPS…ACGQLLSAIQ (190 aa). Residues 567 to 622 are a coiled coil; sequence VDMKFKDEDLQEMEELAQKMESQFGQFFDHVIVNDNLQDACGQLLSAIQKAQEELQ.

Belongs to the MAGUK family. May interact with GRIA2. Interacts with MPDZ. Forms a complex with CRB1 and PALS1. Interacts with FASLG. Detected in the retina (at protein level). Highly enriched in the retina where it is mainly expressed by rod photoreceptors; detected in the inner segment of the photoreceptor layer and in the outer nuclear layer. Also detected at much lower levels in pineal gland, cerebellum, cortex, hippocampus, olfactory bulb, heart, liver and spleen. Expressed in the CA1-CA3 regions of pyramidal cell layers and in the granule cell layer of dentate gyrus in the hippocampus. In the cerebellum, expressed in Purkinje cells and throughout the granule cell layer. In the olfactory bulb, expressed in mitral cells.

It is found in the cytoplasm. May play a role in retinal photoreceptors development. The protein is MAGUK p55 subfamily member 4 (Mpp4) of Mus musculus (Mouse).